The following is a 105-amino-acid chain: Putative neurotoxin 10 (105 aa).

The signal sequence occupies residues 1–21; that stretch reads MTVSCSKVLLSLCLFLMLLKA.

This sequence belongs to the scolopendra neurotoxin 10 family. In terms of processing, contains 3 disulfide bonds. Expressed by the venom gland.

Its subcellular location is the secreted. The polypeptide is Putative neurotoxin 10 (Scolopendra subspinipes (Vietnamese centipede)).